Here is a 96-residue protein sequence, read N- to C-terminus: Small ribosomal subunit protein bS20 (96 aa).

The protein belongs to the bacterial ribosomal protein bS20 family.

Its function is as follows. Binds directly to 16S ribosomal RNA. This is Small ribosomal subunit protein bS20 from Thermotoga petrophila (strain ATCC BAA-488 / DSM 13995 / JCM 10881 / RKU-1).